The primary structure comprises 521 residues: ATP synthase subunit beta (521 aa).

2 stretches are compositionally biased toward low complexity: residues 1–21 (MAKA…AAKA) and 28–42 (PKTT…TKSG). Residues 1–42 (MAKAATPKTTAAAEAKPAAKAPAKKAAPKTTAAAKPAATKSG) form a disordered region. An ATP-binding site is contributed by 199–206 (GGAGVGKT).

The protein belongs to the ATPase alpha/beta chains family. F-type ATPases have 2 components, CF(1) - the catalytic core - and CF(0) - the membrane proton channel. CF(1) has five subunits: alpha(3), beta(3), gamma(1), delta(1), epsilon(1). CF(0) has three main subunits: a(1), b(2) and c(9-12). The alpha and beta chains form an alternating ring which encloses part of the gamma chain. CF(1) is attached to CF(0) by a central stalk formed by the gamma and epsilon chains, while a peripheral stalk is formed by the delta and b chains.

The protein resides in the cell inner membrane. The catalysed reaction is ATP + H2O + 4 H(+)(in) = ADP + phosphate + 5 H(+)(out). Produces ATP from ADP in the presence of a proton gradient across the membrane. The catalytic sites are hosted primarily by the beta subunits. This is ATP synthase subunit beta from Brucella canis (strain ATCC 23365 / NCTC 10854 / RM-666).